The chain runs to 838 residues: Adenylate cyclase (838 aa).

Residues 1-541 (MNYDLFSAQK…DLRLSFPVTV (541 aa)) are catalytic. The tract at residues 547 to 838 (EDLTHACEIR…VPFHSRLAMS (292 aa)) is regulatory.

This sequence belongs to the adenylyl cyclase class-1 family.

It is found in the cytoplasm. The enzyme catalyses ATP = 3',5'-cyclic AMP + diphosphate. The protein is Adenylate cyclase (cya) of Pasteurella multocida (strain Pm70).